Consider the following 178-residue polypeptide: Adenine phosphoribosyltransferase (178 aa).

This sequence belongs to the purine/pyrimidine phosphoribosyltransferase family. As to quaternary structure, homodimer.

It is found in the cytoplasm. The catalysed reaction is AMP + diphosphate = 5-phospho-alpha-D-ribose 1-diphosphate + adenine. Its pathway is purine metabolism; AMP biosynthesis via salvage pathway; AMP from adenine: step 1/1. Its function is as follows. Catalyzes a salvage reaction resulting in the formation of AMP, that is energically less costly than de novo synthesis. This is Adenine phosphoribosyltransferase from Pseudoalteromonas atlantica (strain T6c / ATCC BAA-1087).